We begin with the raw amino-acid sequence, 411 residues long: Squalene synthase (411 aa).

Helical transmembrane passes span 281 to 301 (SIFR…AMCY) and 388 to 408 (SPVL…QLSG).

This sequence belongs to the phytoene/squalene synthase family. Requires Mg(2+) as cofactor.

The protein resides in the endoplasmic reticulum membrane. The catalysed reaction is 2 (2E,6E)-farnesyl diphosphate + NADPH + H(+) = squalene + 2 diphosphate + NADP(+). It carries out the reaction 2 (2E,6E)-farnesyl diphosphate + NADH + H(+) = squalene + 2 diphosphate + NAD(+). It functions in the pathway terpene metabolism; lanosterol biosynthesis; lanosterol from farnesyl diphosphate: step 1/3. This Nicotiana benthamiana protein is Squalene synthase.